We begin with the raw amino-acid sequence, 578 residues long: Putative diflavin flavoprotein A 2 (578 aa).

Residues glutamine 39–histidine 233 are zinc metallo-hydrolase. Residues valine 262–lysine 404 form the Flavodoxin-like domain. Positions valine 429–serine 578 are flavodoxin-reductase-like.

In the N-terminal section; belongs to the zinc metallo-hydrolase group 3 family. The protein in the C-terminal section; belongs to the flavodoxin reductase family. Requires Fe cation as cofactor.

Mediates electron transfer from NADH to oxygen, reducing it to water. This modular protein has 3 redox cofactors, in other organisms the same activity requires 2 or 3 proteins. The sequence is that of Putative diflavin flavoprotein A 2 (dfa2) from Thermosynechococcus vestitus (strain NIES-2133 / IAM M-273 / BP-1).